We begin with the raw amino-acid sequence, 240 residues long: Ubiquinone biosynthesis O-methyltransferase (240 aa).

Residues R44, G64, D85, and M129 each contribute to the S-adenosyl-L-methionine site.

Belongs to the methyltransferase superfamily. UbiG/COQ3 family.

It catalyses the reaction a 3-demethylubiquinol + S-adenosyl-L-methionine = a ubiquinol + S-adenosyl-L-homocysteine + H(+). It carries out the reaction a 3-(all-trans-polyprenyl)benzene-1,2-diol + S-adenosyl-L-methionine = a 2-methoxy-6-(all-trans-polyprenyl)phenol + S-adenosyl-L-homocysteine + H(+). It participates in cofactor biosynthesis; ubiquinone biosynthesis. In terms of biological role, O-methyltransferase that catalyzes the 2 O-methylation steps in the ubiquinone biosynthetic pathway. This is Ubiquinone biosynthesis O-methyltransferase from Escherichia coli O8 (strain IAI1).